The following is a 127-amino-acid chain: Large ribosomal subunit protein bL12 (127 aa).

The protein belongs to the bacterial ribosomal protein bL12 family. Homodimer. Part of the ribosomal stalk of the 50S ribosomal subunit. Forms a multimeric L10(L12)X complex, where L10 forms an elongated spine to which 2 to 4 L12 dimers bind in a sequential fashion. Binds GTP-bound translation factors.

Its function is as follows. Forms part of the ribosomal stalk which helps the ribosome interact with GTP-bound translation factors. Is thus essential for accurate translation. The chain is Large ribosomal subunit protein bL12 from Bordetella bronchiseptica (strain ATCC BAA-588 / NCTC 13252 / RB50) (Alcaligenes bronchisepticus).